The following is a 402-amino-acid chain: 1-deoxy-D-xylulose 5-phosphate reductoisomerase (402 aa).

Thr25, Gly26, Ser27, Val28, Arg52, Asn53, and Asn136 together coordinate NADPH. Lys137 is a binding site for 1-deoxy-D-xylulose 5-phosphate. Glu138 provides a ligand contact to NADPH. Residue Asp162 participates in Mn(2+) binding. Positions 163, 164, 188, and 211 each coordinate 1-deoxy-D-xylulose 5-phosphate. Glu164 serves as a coordination point for Mn(2+). Position 217 (Gly217) interacts with NADPH. 1-deoxy-D-xylulose 5-phosphate-binding residues include Ser224, Asn229, Lys230, and Glu233. Glu233 lines the Mn(2+) pocket.

This sequence belongs to the DXR family. Mg(2+) serves as cofactor. It depends on Mn(2+) as a cofactor.

It catalyses the reaction 2-C-methyl-D-erythritol 4-phosphate + NADP(+) = 1-deoxy-D-xylulose 5-phosphate + NADPH + H(+). It functions in the pathway isoprenoid biosynthesis; isopentenyl diphosphate biosynthesis via DXP pathway; isopentenyl diphosphate from 1-deoxy-D-xylulose 5-phosphate: step 1/6. Functionally, catalyzes the NADPH-dependent rearrangement and reduction of 1-deoxy-D-xylulose-5-phosphate (DXP) to 2-C-methyl-D-erythritol 4-phosphate (MEP). This chain is 1-deoxy-D-xylulose 5-phosphate reductoisomerase, found in Rhodospirillum centenum (strain ATCC 51521 / SW).